The chain runs to 181 residues: MDFECGSLVTDGERVSNPTDRGFRWSAAPRGMLKPSGWRADGGVWFCDVTLDYDTIVAHGTLQDDNLVFMTRLYFGPKGGLIPDDVKSDRHVCPDCGVKVIRFTLVDDFLDEHVYHSRGGCPRIRQFLGQRVLSEYYELTQFLKGDRPYPARRKWDLSRDSAVLKAYAVYASPKDNSVQTG.

This is an uncharacterized protein from Ictalurid herpesvirus 1 (strain Auburn) (IcHV-1).